Consider the following 137-residue polypeptide: ATP synthase epsilon chain, chloroplastic (137 aa).

The protein belongs to the ATPase epsilon chain family. F-type ATPases have 2 components, CF(1) - the catalytic core - and CF(0) - the membrane proton channel. CF(1) has five subunits: alpha(3), beta(3), gamma(1), delta(1), epsilon(1). CF(0) has three main subunits: a, b and c.

It is found in the plastid. Its subcellular location is the chloroplast thylakoid membrane. In terms of biological role, produces ATP from ADP in the presence of a proton gradient across the membrane. This chain is ATP synthase epsilon chain, chloroplastic, found in Bigelowiella natans (Pedinomonas minutissima).